The following is a 506-amino-acid chain: Carboxyl-terminal PDZ ligand of neuronal nitric oxide synthase protein (506 aa).

The PID domain maps to 26–196; that stretch reads FQHGICFEAK…ESERNSNSSG (171 aa). Disordered stretches follow at residues 175-224 and 241-260; these read HTQQ…VEVP and DAVG…HPQE. Residues Ser188, Ser192, and Ser195 each carry the phosphoserine modification. Over residues 203–213 the composition is skewed to low complexity; that stretch reads TGAERASTATA. Ser266 carries the phosphoserine modification. Residues 322-363 adopt a coiled-coil conformation; that stretch reads AAEAAARLEAQARVHQLLLQNKDMLQHISLLVKQVQELELKL. Residues Ser371, Ser374, Ser401, and Ser417 each carry the phosphoserine modification. The segment at 494 to 506 is interaction with NOS1; that stretch reads QELGDGLDDEIAV. The short motif at 504–506 is the PDZ-binding element; that stretch reads IAV.

In terms of assembly, interacts with the PDZ domain of NOS1 or the second PDZ domain of DLG4 through its C-terminus. Interacts with RASD1 and SYN1, SYN2 and SYN3 via its PID domain. Forms a ternary complex with NOS1 and RASD1. Forms a ternary complex with NOS1 and SYN1. Expressed in kidney glomeruli podocytes.

The protein resides in the cell projection. It is found in the filopodium. Its subcellular location is the podosome. Its function is as follows. Adapter protein involved in neuronal nitric-oxide (NO) synthesis regulation via its association with nNOS/NOS1. The complex formed with NOS1 and synapsins is necessary for specific NO and synapsin functions at a presynaptic level. Mediates an indirect interaction between NOS1 and RASD1 leading to enhance the ability of NOS1 to activate RASD1. Competes with DLG4 for interaction with NOS1, possibly affecting NOS1 activity by regulating the interaction between NOS1 and DLG4. In kidney podocytes, plays a role in podosomes and filopodia formation through CDC42 activation. This chain is Carboxyl-terminal PDZ ligand of neuronal nitric oxide synthase protein, found in Homo sapiens (Human).